The primary structure comprises 547 residues: T-complex protein 1 subunit gamma (547 aa).

Residue G41 coordinates ADP. G41 provides a ligand contact to ATP. D92 provides a ligand contact to Mg(2+). ADP is bound by residues G93, T94, T95, S96, T161, and K162. ATP contacts are provided by G93, T94, and T95. The cysteines at positions 365 and 371 are disulfide-linked. Positions 410, 481, 482, 496, and 501 each coordinate ADP. ATP contacts are provided by G410 and G481. E496 serves as a coordination point for ATP. The segment covering 525-534 (HKKKGEDHGR) has biased composition (basic and acidic residues). The interval 525-547 (HKKKGEDHGRQPAAAPEAPQQAE) is disordered. Residues 535–547 (QPAAAPEAPQQAE) show a composition bias toward low complexity.

Belongs to the TCP-1 chaperonin family. Component of the chaperonin-containing T-complex (TRiC), a hexadecamer composed of two identical back-to-back stacked rings enclosing a protein folding chamber. Each ring is made up of eight different subunits: TCP1/CCT1, CCT2, CCT3, CCT4, CCT5, CCT6A/CCT6, CCT7, CCT8.

The protein resides in the cytoplasm. It catalyses the reaction ATP + H2O = ADP + phosphate + H(+). Component of the chaperonin-containing T-complex (TRiC), a molecular chaperone complex that assists the folding of actin, tubulin and other proteins upon ATP hydrolysis. The sequence is that of T-complex protein 1 subunit gamma (cct3) from Xenopus laevis (African clawed frog).